Here is a 78-residue protein sequence, read N- to C-terminus: Large ribosomal subunit protein uL24 (78 aa).

This sequence belongs to the universal ribosomal protein uL24 family. In terms of assembly, part of the 50S ribosomal subunit.

Its function is as follows. One of two assembly initiator proteins, it binds directly to the 5'-end of the 23S rRNA, where it nucleates assembly of the 50S subunit. One of the proteins that surrounds the polypeptide exit tunnel on the outside of the subunit. The sequence is that of Large ribosomal subunit protein uL24 from Helicobacter hepaticus (strain ATCC 51449 / 3B1).